Here is a 145-residue protein sequence, read N- to C-terminus: D-aminoacyl-tRNA deacylase (145 aa).

Residues 137–138 carry the Gly-cisPro motif, important for rejection of L-amino acids motif; it reads GP.

This sequence belongs to the DTD family. In terms of assembly, homodimer.

It is found in the cytoplasm. The enzyme catalyses glycyl-tRNA(Ala) + H2O = tRNA(Ala) + glycine + H(+). It carries out the reaction a D-aminoacyl-tRNA + H2O = a tRNA + a D-alpha-amino acid + H(+). An aminoacyl-tRNA editing enzyme that deacylates mischarged D-aminoacyl-tRNAs. Also deacylates mischarged glycyl-tRNA(Ala), protecting cells against glycine mischarging by AlaRS. Acts via tRNA-based rather than protein-based catalysis; rejects L-amino acids rather than detecting D-amino acids in the active site. By recycling D-aminoacyl-tRNA to D-amino acids and free tRNA molecules, this enzyme counteracts the toxicity associated with the formation of D-aminoacyl-tRNA entities in vivo and helps enforce protein L-homochirality. This is D-aminoacyl-tRNA deacylase from Pectobacterium atrosepticum (strain SCRI 1043 / ATCC BAA-672) (Erwinia carotovora subsp. atroseptica).